Consider the following 316-residue polypeptide: Mitochondrial distribution and morphology protein 12 (316 aa).

An SMP-LTD domain is found at 1–312; sequence MSIDLEWNGL…FPNFHTLVLG (312 aa).

This sequence belongs to the MDM12 family. In terms of assembly, component of the ER-mitochondria encounter structure (ERMES) or MDM complex, composed of MMM1, MDM10, MDM12 and MDM34. An MMM1 homodimer associates with one molecule of MDM12 on each side in a pairwise head-to-tail manner, and the SMP-LTD domains of MMM1 and MDM12 generate a continuous hydrophobic tunnel for phospholipid trafficking.

Its subcellular location is the mitochondrion outer membrane. It localises to the endoplasmic reticulum membrane. Component of the ERMES/MDM complex, which serves as a molecular tether to connect the endoplasmic reticulum (ER) and mitochondria. Components of this complex are involved in the control of mitochondrial shape and protein biogenesis, and function in nonvesicular lipid trafficking between the ER and mitochondria. MDM12 is required for the interaction of the ER-resident membrane protein MMM1 and the outer mitochondrial membrane-resident beta-barrel protein MDM10. The MDM12-MMM1 subcomplex functions in the major beta-barrel assembly pathway that is responsible for biogenesis of all mitochondrial outer membrane beta-barrel proteins, and acts in a late step after the SAM complex. The MDM10-MDM12-MMM1 subcomplex further acts in the TOM40-specific pathway after the action of the MDM12-MMM1 complex. Essential for establishing and maintaining the structure of mitochondria and maintenance of mtDNA nucleoids. This is Mitochondrial distribution and morphology protein 12 from Postia placenta (strain ATCC 44394 / Madison 698-R) (Brown rot fungus).